Reading from the N-terminus, the 125-residue chain is NADPH-dependent 7-cyano-7-deazaguanine reductase (125 aa).

Cys-41 acts as the Thioimide intermediate in catalysis. The active-site Proton donor is Asp-48. Substrate contacts are provided by residues 63–65 (VEL) and 82–83 (HE).

This sequence belongs to the GTP cyclohydrolase I family. QueF type 1 subfamily.

Its subcellular location is the cytoplasm. The catalysed reaction is 7-aminomethyl-7-carbaguanine + 2 NADP(+) = 7-cyano-7-deazaguanine + 2 NADPH + 3 H(+). It participates in tRNA modification; tRNA-queuosine biosynthesis. Functionally, catalyzes the NADPH-dependent reduction of 7-cyano-7-deazaguanine (preQ0) to 7-aminomethyl-7-deazaguanine (preQ1). This is NADPH-dependent 7-cyano-7-deazaguanine reductase from Sulfurimonas denitrificans (strain ATCC 33889 / DSM 1251) (Thiomicrospira denitrificans (strain ATCC 33889 / DSM 1251)).